The primary structure comprises 1113 residues: MFSQVPRTPAAGCYYLNPLTPESQEMYLRFDQTARRSPYRMSRILARHHLVTKIQQEIEAKEACDWLRAAGFPQYAQLYEDSQFPINIAAVKKDHDFLERDLVEPLCRRLNTLNKCASMRLDVNFQRKKGDDSDEEDLCISNKWTFQRTSRRWSRVDDLHTLFPVADRNGSPGGPRMRNTASSESVLTDLSEPEVCSIHSESSGGSDSRSQSGHHSADSTHALEATLVSSSLPQSTREGLNQSFHPKNEKPTRTRAKSFLKRMDTLRVKGALGRHKGPGRTGGLVISRPVLQQEPESFKTMQCVQIPNGDLQTSPPAACRKGLPCSSKSSGESSPLENSSTVSTPCMKERKCHHEANKRGGMYLEDLDVLAGTALPDTSDQNHMHGFHSQENLVVHIPKDHKPGTFPKALSIESLSPTDNSNGVNWRTGSISLGRQQGPGMREPRLMSSCHRASRVSIYDNVPSSHLYASTGDLLDLEKDGLLPQLDDILQHVNGIQEVVDDWSKNILPELQSHSTLAGDPGLSPFPSPNQVTLDFEGNSVSEGRTTPSDVERDRTSLNESEATGVRERRDSGVGASLTRPNRRLRWSSFQLSHQPQPSPATPHISSQTAAQLNLLQRFSLLRLTAIMEKYSMSNKHGWTWSVPKFMKRIKAPDYRDKAVFGVPLIVHVQRTGQPLPQSIQQALRYLRSNCLDQVGLFRKSGVKSRIHALRQMNENFPDNVSYEDQSAYDVADMVKQFFRDLPEPLFTNKLSETFLHIYQYVPKEQRLQAVQAAILLLADENREALQTLLCFLHDVVNLVDENQMTPMNLAVCLAPSLFHLNLLKKESSPKVIQKKYATGKPDQKDLNENLAAAQGLAHMITECNRLFEVPHEMVAQSRDSYLEAEIHVPSLEDLGAQLAESGATFHTYLEHLVQGLQKEAKEKFKGWVTCSSPDNTDLAFKKVGDGHPLKLWKASVEVEAPPSVVLNRVLRERHLWDEDFVQWKVVERLDKQTEIYQYVLNSMVPHPSRDFLVLRTWKTDLPKGMCTLVSLSVEYEEAQLMGGVRAVVMDSQYLIEPCGSGKSRLTHICRIDLKGHSPEWYSKGFGHLCAAEVTRIRNSFQPLVAEGPETKI.

At methionine 1 the chain carries N-acetylmethionine. The SAM domain occupies 55–122; sequence QQEIEAKEAC…LNKCASMRLD (68 aa). Disordered regions lie at residues 164-218, 230-256, and 308-343; these read PVAD…HSAD, SSLPQSTREGLNQSFHPKNEKPTRTRA, and NGDLQTSPPAACRKGLPCSSKSSGESSPLENSSTVS. Over residues 179–188 the composition is skewed to polar residues; it reads NTASSESVLT. Over residues 197-214 the composition is skewed to low complexity; that stretch reads SIHSESSGGSDSRSQSGH. Residues 230–245 are compositionally biased toward polar residues; sequence SSLPQSTREGLNQSFH. Over residues 322-340 the composition is skewed to low complexity; it reads GLPCSSKSSGESSPLENSS. The residue at position 411 (serine 411) is a Phosphoserine. Polar residues-rich tracts occupy residues 421–435 and 529–549; these read SNGVNWRTGSISLGR and PNQVTLDFEGNSVSEGRTTPS. Disordered stretches follow at residues 421–443 and 514–578; these read SNGVNWRTGSISLGRQQGPGMRE and HSTL…GASL. Residues 663–868 form the Rho-GAP domain; sequence VPLIVHVQRT…HMITECNRLF (206 aa). Residues 899–1109 enclose the START domain; sequence LAESGATFHT…SFQPLVAEGP (211 aa).

As to quaternary structure, homodimer. Interacts with TAX1BP1.

It is found in the cytoplasm. Its subcellular location is the membrane. The protein localises to the mitochondrion membrane. It localises to the lipid droplet. Functionally, may function as a GTPase-activating protein. The polypeptide is StAR-related lipid transfer protein 13 (Stard13) (Mus musculus (Mouse)).